The chain runs to 257 residues: Putative hydro-lyase Bcep18194_B2576 (257 aa).

The protein belongs to the D-glutamate cyclase family.

This is Putative hydro-lyase Bcep18194_B2576 from Burkholderia lata (strain ATCC 17760 / DSM 23089 / LMG 22485 / NCIMB 9086 / R18194 / 383).